The sequence spans 290 residues: Acetylglutamate kinase (290 aa).

Substrate contacts are provided by residues 60–61 (GG), arginine 82, and asparagine 187.

This sequence belongs to the acetylglutamate kinase family. ArgB subfamily.

The protein localises to the cytoplasm. The catalysed reaction is N-acetyl-L-glutamate + ATP = N-acetyl-L-glutamyl 5-phosphate + ADP. It participates in amino-acid biosynthesis; L-arginine biosynthesis; N(2)-acetyl-L-ornithine from L-glutamate: step 2/4. Catalyzes the ATP-dependent phosphorylation of N-acetyl-L-glutamate. The sequence is that of Acetylglutamate kinase from Marinobacter nauticus (strain ATCC 700491 / DSM 11845 / VT8) (Marinobacter aquaeolei).